Consider the following 68-residue polypeptide: Protein SlyX homolog (68 aa).

It belongs to the SlyX family.

In Pseudomonas putida (strain ATCC 700007 / DSM 6899 / JCM 31910 / BCRC 17059 / LMG 24140 / F1), this protein is Protein SlyX homolog.